A 164-amino-acid polypeptide reads, in one-letter code: Pheromone-binding protein 2 (164 aa).

The N-terminal stretch at 1–22 is a signal peptide; the sequence is MIRKVLLSVLLAVLMTINLGQA. 3 disulfide bridges follow: C41-C76, C72-C130, and C119-C139.

Belongs to the PBP/GOBP family. Antenna.

Its function is as follows. This major soluble protein in olfactory sensilla of male moths might serve to solubilize the extremely hydrophobic pheromone molecules and to transport pheromone through the aqueous lymph to receptors located on olfactory cilia. The protein is Pheromone-binding protein 2 of Antheraea pernyi (Chinese oak silk moth).